A 453-amino-acid polypeptide reads, in one-letter code: tRNA modification GTPase MnmE (453 aa).

(6S)-5-formyl-5,6,7,8-tetrahydrofolate contacts are provided by Arg-22, Glu-79, and Lys-119. One can recognise a TrmE-type G domain in the interval 215-376 (GMKVVIAGRP…LRNHLKECMG (162 aa)). Asn-225 provides a ligand contact to K(+). Residues 225 to 230 (NAGKSS), 244 to 250 (TDIAGTT), 269 to 272 (DTAG), and 334 to 337 (NKAD) contribute to the GTP site. A Mg(2+)-binding site is contributed by Ser-229. Positions 244, 246, and 249 each coordinate K(+). Position 250 (Thr-250) interacts with Mg(2+). Residue Lys-453 participates in (6S)-5-formyl-5,6,7,8-tetrahydrofolate binding.

This sequence belongs to the TRAFAC class TrmE-Era-EngA-EngB-Septin-like GTPase superfamily. TrmE GTPase family. As to quaternary structure, homodimer. Heterotetramer of two MnmE and two MnmG subunits. K(+) serves as cofactor.

It is found in the cytoplasm. Functionally, exhibits a very high intrinsic GTPase hydrolysis rate. Involved in the addition of a carboxymethylaminomethyl (cmnm) group at the wobble position (U34) of certain tRNAs, forming tRNA-cmnm(5)s(2)U34. This is tRNA modification GTPase MnmE from Vibrio vulnificus (strain CMCP6).